Reading from the N-terminus, the 129-residue chain is MAKPAARPRKKVKKTVVDGIAHIHASFNNTIVTITDRQGNALSWATSGGSGFRGSRKSTPFAAQVAAERAGQAALEYGLKNLDVNVKGPGPGRESAVRALNGCGYKIASITDVTPIPHNGCRPPKKRRV.

This sequence belongs to the universal ribosomal protein uS11 family. In terms of assembly, part of the 30S ribosomal subunit. Interacts with proteins S7 and S18. Binds to IF-3.

Located on the platform of the 30S subunit, it bridges several disparate RNA helices of the 16S rRNA. Forms part of the Shine-Dalgarno cleft in the 70S ribosome. This chain is Small ribosomal subunit protein uS11, found in Pseudomonas fluorescens (strain SBW25).